The chain runs to 172 residues: Translationally-controlled tumor protein homolog (172 aa).

The region spanning 1–172 (MKIYKDIITG…FKHGLDEEKC (172 aa)) is the TCTP domain.

It belongs to the TCTP family.

The protein resides in the cytoplasm. Functionally, involved in calcium binding and microtubule stabilization. In Drosophila yakuba (Fruit fly), this protein is Translationally-controlled tumor protein homolog.